Reading from the N-terminus, the 216-residue chain is Somatotropin (216 aa).

A signal peptide spans Met-1–Ala-26. His-45 contributes to the Zn(2+) binding site. Cys-78 and Cys-189 are oxidised to a cystine. Residue Ser-131 is modified to Phosphoserine. Glu-198 provides a ligand contact to Zn(2+). A disulfide bond links Cys-206 and Cys-214.

The protein belongs to the somatotropin/prolactin family.

It is found in the secreted. Plays an important role in growth control. Its major role in stimulating body growth is to stimulate the liver and other tissues to secrete IGF1. It stimulates both the differentiation and proliferation of myoblasts. It also stimulates amino acid uptake and protein synthesis in muscle and other tissues. In Delphinus delphis (Short-beaked common dolphin), this protein is Somatotropin (GH1).